A 503-amino-acid polypeptide reads, in one-letter code: Serine/threonine-protein kinase chk-1 (503 aa).

The region spanning 24-286 (YRVVQTLGEG…IEQIQADPWY (263 aa)) is the Protein kinase domain. ATP is bound by residues 30–38 (LGEGAFGEV) and Lys54. Asp150 serves as the catalytic Proton acceptor. The disordered stretch occupies residues 320 to 346 (SAKRRHLETPNEKSTLAERQNASFSQP). The span at 331-346 (EKSTLAERQNASFSQP) shows a compositional bias: polar residues. Residue Ser344 is modified to Phosphoserine.

This sequence belongs to the protein kinase superfamily. CAMK Ser/Thr protein kinase family. NIM1 subfamily. In terms of tissue distribution, expressed in the germline.

It localises to the cytoplasm. Its subcellular location is the nucleus. The protein localises to the perinuclear region. The catalysed reaction is L-seryl-[protein] + ATP = O-phospho-L-seryl-[protein] + ADP + H(+). The enzyme catalyses L-threonyl-[protein] + ATP = O-phospho-L-threonyl-[protein] + ADP + H(+). Serine/threonine-protein kinase which is required for checkpoint-mediated cell cycle arrest and activation of DNA repair in response to the presence of DNA damage or unreplicated DNA. May also negatively regulate cell cycle progression during unperturbed cell cycles. Required for checkpoint mediated cell cycle arrest in response to DNA damage in germline cells. Delays cell-cycle reentry of the Z2 and Z3 primordial germ cells in response to transcription-induced DNA damage as they emerge from cell cycle arrest in L1 larvae. Essential for embryogenesis. The sequence is that of Serine/threonine-protein kinase chk-1 from Caenorhabditis elegans.